The following is a 479-amino-acid chain: MKGGNYTSLGTCSGINVSGNVAGTRKMSLGKSIKMYLTIFILTTCIYMALYQYHISREPFAASEVVKHQEKSSSYIASYLWSPISLLMANSSSNTNNNSTTTSTTTTTAPTTPTTTTTTTVGSVGQKLGASSISSIRMVSLAATIPSFKSTLSESRSVSLGGHQKTATVKTSTTITTRTTASGLATTKLSATTRTTAKTSAKLSAATTPTASHMENGYKTRPTFVAASLPPPLYIITPTYRRPEQLAELTRLGYTLKHVVNLLWLVIEDANKTNPLVGHTLDRIGVPYEYMVAPMPEKYKQTKKAKPRGVSNRNRGLEYLREHATEGVLYFADDDNTYDISIFEQMRYISKVAMWPVGLVTKTGVSSPIIQAGKLVGYYDGWIGGRKYPVDMAGFAVSVKFLKERPNAQMPFKPGYEEDGFLRSLAPLDDAEIELLADECRDILTWHTQTKKNAPAQALNRTRYKNTNLEHIDRLLVRP.

The Cytoplasmic portion of the chain corresponds to 1 to 34; sequence MKGGNYTSLGTCSGINVSGNVAGTRKMSLGKSIK. The chain crosses the membrane as a helical; Signal-anchor for type II membrane protein span at residues 35-50; sequence MYLTIFILTTCIYMAL. The Lumenal segment spans residues 51-479; that stretch reads YQYHISREPF…EHIDRLLVRP (429 aa). Residues asparagine 90, asparagine 97, asparagine 98, and asparagine 271 are each glycosylated (N-linked (GlcNAc...) asparagine). Positions 94–120 are enriched in low complexity; it reads NTNNNSTTTSTTTTTAPTTPTTTTTTT. Positions 94-122 are disordered; that stretch reads NTNNNSTTTSTTTTTAPTTPTTTTTTTVG. Position 335 (aspartate 335) interacts with Mn(2+). The active-site Proton acceptor is the glutamate 418. Asparagine 460 carries N-linked (GlcNAc...) asparagine glycosylation.

The protein belongs to the glycosyltransferase 43 family. The cofactor is Mn(2+).

It is found in the golgi apparatus membrane. It catalyses the reaction 3-O-(beta-D-galactosyl-(1-&gt;3)-beta-D-galactosyl-(1-&gt;4)-beta-D-xylosyl)-L-seryl-[protein] + UDP-alpha-D-glucuronate = 3-O-(beta-D-GlcA-(1-&gt;3)-beta-D-Gal-(1-&gt;3)-beta-D-Gal-(1-&gt;4)-beta-D-Xyl)-L-seryl-[protein] + UDP + H(+). Its pathway is protein modification; protein glycosylation. Functionally, involved in the biosynthesis of L2/HNK-1 carbohydrate epitope on both glycolipids and glycoproteins. Enzyme has a broad specificity. The polypeptide is Galactosylgalactosylxylosylprotein 3-beta-glucuronosyltransferase P (GlcAT-P) (Drosophila melanogaster (Fruit fly)).